The chain runs to 203 residues: NAD(P)H dehydrogenase (quinone) (203 aa).

The 192-residue stretch at 3–194 (VLIVYYSMYG…AGARFQGRYV (192 aa)) folds into the Flavodoxin-like domain. Residues 9-14 (SMYGHI) and 82-84 (TRF) each bind FMN. Tyr-11 contributes to the NAD(+) binding site. Trp-102 contacts substrate. Residues 117–123 (SSATQHG) and His-138 contribute to the FMN site.

This sequence belongs to the WrbA family. It depends on FMN as a cofactor.

The catalysed reaction is a quinone + NADH + H(+) = a quinol + NAD(+). It catalyses the reaction a quinone + NADPH + H(+) = a quinol + NADP(+). The protein is NAD(P)H dehydrogenase (quinone) of Geobacter sulfurreducens (strain ATCC 51573 / DSM 12127 / PCA).